Reading from the N-terminus, the 100-residue chain is Urease subunit gamma (100 aa).

It belongs to the urease gamma subunit family. In terms of assembly, heterotrimer of UreA (gamma), UreB (beta) and UreC (alpha) subunits. Three heterotrimers associate to form the active enzyme.

The protein localises to the cytoplasm. The enzyme catalyses urea + 2 H2O + H(+) = hydrogencarbonate + 2 NH4(+). It functions in the pathway nitrogen metabolism; urea degradation; CO(2) and NH(3) from urea (urease route): step 1/1. In Parasynechococcus marenigrum (strain WH8102), this protein is Urease subunit gamma.